The primary structure comprises 194 residues: Adenylate kinase (194 aa).

Gly10 to Thr15 contacts ATP. An NMP region spans residues Ser30–Val59. Residues Thr31, Arg36, Gln57–Val59, Gly85–Arg88, and Gln92 each bind AMP. An LID region spans residues Ser126–Asp142. Arg127 serves as a coordination point for ATP. The AMP site is built by Arg139 and Arg150. Ala178 lines the ATP pocket.

The protein belongs to the adenylate kinase family. Monomer.

It localises to the cytoplasm. The enzyme catalyses AMP + ATP = 2 ADP. Its pathway is purine metabolism; AMP biosynthesis via salvage pathway; AMP from ADP: step 1/1. In terms of biological role, catalyzes the reversible transfer of the terminal phosphate group between ATP and AMP. Plays an important role in cellular energy homeostasis and in adenine nucleotide metabolism. This is Adenylate kinase from Brucella abortus (strain S19).